Reading from the N-terminus, the 218-residue chain is Adenylate kinase (218 aa).

G10–T15 lines the ATP pocket. The segment at S30–V59 is NMP. AMP contacts are provided by residues T31, R36, G57 to V59, G85 to R88, and Q92. The LID stretch occupies residues G122–D159. Residues R123 and V132–Y133 each bind ATP. Residues R156 and R167 each contribute to the AMP site. Residue G203 participates in ATP binding.

This sequence belongs to the adenylate kinase family. In terms of assembly, monomer.

It localises to the cytoplasm. The catalysed reaction is AMP + ATP = 2 ADP. The protein operates within purine metabolism; AMP biosynthesis via salvage pathway; AMP from ADP: step 1/1. In terms of biological role, catalyzes the reversible transfer of the terminal phosphate group between ATP and AMP. Plays an important role in cellular energy homeostasis and in adenine nucleotide metabolism. In Saccharophagus degradans (strain 2-40 / ATCC 43961 / DSM 17024), this protein is Adenylate kinase.